Consider the following 266-residue polypeptide: Ribosome-recycling factor, chloroplastic (266 aa).

Over residues 1 to 26 the composition is skewed to low complexity; that stretch reads MPPLHAVSPAAAAAPPRALSSAARVP. The disordered stretch occupies residues 1–30; the sequence is MPPLHAVSPAAAAAPPRALSSAARVPQRPG. A chloroplast-targeting transit peptide spans 1-74; that stretch reads MPPLHAVSPA…SDKRAVLRHA (74 aa). Coiled coils occupy residues 75–109 and 207–266; these read TIEE…NTVR and VAIR…LMKI.

This sequence belongs to the RRF family.

The protein localises to the plastid. It is found in the chloroplast. In terms of biological role, responsible for the release of ribosomes from messenger RNA at the termination of chloroplastic protein biosynthesis. This chain is Ribosome-recycling factor, chloroplastic, found in Oryza sativa subsp. indica (Rice).